The sequence spans 454 residues: Metacaspase-1A (454 aa).

A compositionally biased stretch (gly residues) spans 1-16 (MSYGYPGQGYGPGGGH). Residues 1-129 (MSYGYPGQGY…GHQTRNQGSH (129 aa)) are disordered. Low complexity-rich tracts occupy residues 38–47 (YSNPGQGQYN), 59–80 (YHQQ…YPPQ), 88–101 (GQQQ…HSQR), and 109–120 (GYDIYGYPIGSG). Active-site residues include His-244 and Cys-300.

This sequence belongs to the peptidase C14B family.

Involved in cell death (apoptosis). This chain is Metacaspase-1A (casA), found in Neurospora crassa (strain ATCC 24698 / 74-OR23-1A / CBS 708.71 / DSM 1257 / FGSC 987).